The sequence spans 503 residues: ATP synthase subunit alpha (503 aa).

170–177 (GDRKTGKT) contributes to the ATP binding site.

It belongs to the ATPase alpha/beta chains family. F-type ATPases have 2 components, CF(1) - the catalytic core - and CF(0) - the membrane proton channel. CF(1) has five subunits: alpha(3), beta(3), gamma(1), delta(1), epsilon(1). CF(0) has four main subunits: a, b, b' and c.

It is found in the cellular thylakoid membrane. The catalysed reaction is ATP + H2O + 4 H(+)(in) = ADP + phosphate + 5 H(+)(out). Functionally, produces ATP from ADP in the presence of a proton gradient across the membrane. The alpha chain is a regulatory subunit. The chain is ATP synthase subunit alpha from Gloeothece citriformis (strain PCC 7424) (Cyanothece sp. (strain PCC 7424)).